The following is a 1013-amino-acid chain: MFAWWGRTVYQFRYIVIGVMVALCLGGGVYGISLGNHVTQSGFYDEGSQSVAASLIGDEVYGRDRTSHVVAILTPPDDKKVTDKAWQKKVTEELDQVVKDHEDQIVGWVGWLKAPDTTDPTVSAMKTQDLRHTFISIPLQGDDDDEILKNYQVVEPELQQVNGGDIRLAGLNPLASELTGTIGEDQKRAEVAAIPLVAVVLFFVFGTVIAAALPAIIGGLAIAGALGIMRLVAEFTPVHFFAQPVVTLIGLGIAIDYGLFIVSRFREEIAEGYDTEAAVRRTVMTSGRTVVFSAVIIVASSVPLLLFPQGFLKSITYAIIASVMLAAILSITVLAAALAILGPRVDALGVTTLLKIPFLANWQFSRRIIDWFAEKTQKTKTREEVERGFWGRLVNVVMKRPIAFAAPILVVMVLLIIPLGQLSLGGISEKYLPPDNAVRQSQEQFDKLFPGFRTEPLTLVMKREDGEPITDAQIADMRAKALTVSGFTDPDNDPEKMWKERPANDSGSKDPSVRVIQNGLENRNDAAKKIDELRALQPPHGIEVFVGGTPALEQDSIHSLFDKLPLMALILIVTTTVLMFLAFGSVVLPIKAALMSALTLGSTMGILTWMFVDGHGSGLMNYTPQPLMAPMIGLIIAVIWGLSTDYEVFLVSRMVEARERGMSTAEAIRIGTATTGRLITGAALILAVVAGAFVFSDLVMMKYLAFGLLIALLLDATIIRMFLVPAVMKLLGDDCWWAPRWMKRVQEKLGLGETELPDERKRPTVRESETDQRALVGVGAPPPPPRPHDPTHPAPEPVRPMPPMRSNAPSAAGTARISTPPQPPQPPQAPAQQAGDEPATTRFAMARNAVRNAVNSAVHGGAGSAAAPTERAPRPGGPAQPPAPPQREEREIESWLGALRGPAPAKNVPQPPAQPQRPSTDTTRAMPPQGRPPAGPADRGNENAPTTAFSAQRPPNGGAPADATTAIPTPPQREQEPSTEKLNTREDAPEDPETKRRGGGMSAQDLLRREGRL.

Residues 1–14 are Cytoplasmic-facing; sequence MFAWWGRTVYQFRY. Residues 15-35 form a helical membrane-spanning segment; sequence IVIGVMVALCLGGGVYGISLG. The Periplasmic segment spans residues 36-196; the sequence is NHVTQSGFYD…KRAEVAAIPL (161 aa). Position 40–44 (40–44) interacts with a 1,2-diacylglycero-3-phosphoethanolamine; sequence QSGFY. 2 helical membrane-spanning segments follow: residues 197–217 and 218–238; these read VAVVLFFVFGTVIAAALPAII and GGLAIAGALGIMRLVAEFTPV. The Periplasmic segment spans residues 239 to 240; that stretch reads HF. A helical membrane pass occupies residues 241–261; it reads FAQPVVTLIGLGIAIDYGLFI. The Cytoplasmic portion of the chain corresponds to 262–290; it reads VSRFREEIAEGYDTEAAVRRTVMTSGRTV. The chain crosses the membrane as a helical span at residues 291–311; the sequence is VFSAVIIVASSVPLLLFPQGF. At 312–317 the chain is on the periplasmic side; it reads LKSITY. A helical transmembrane segment spans residues 318 to 338; the sequence is AIIASVMLAAILSITVLAAAL. Topologically, residues 339-401 are cytoplasmic; sequence AILGPRVDAL…RLVNVVMKRP (63 aa). The chain crosses the membrane as a helical span at residues 402–422; that stretch reads IAFAAPILVVMVLLIIPLGQL. Residues 423–567 lie on the Periplasmic side of the membrane; sequence SLGGISEKYL…HSLFDKLPLM (145 aa). Residues 485 to 513 form a disordered region; sequence SGFTDPDNDPEKMWKERPANDSGSKDPSV. Basic and acidic residues predominate over residues 493-512; the sequence is DPEKMWKERPANDSGSKDPS. The helical transmembrane segment at 568-588 threads the bilayer; sequence ALILIVTTTVLMFLAFGSVVL. The Cytoplasmic portion of the chain corresponds to 589–591; that stretch reads PIK. The helical transmembrane segment at 592–612 threads the bilayer; that stretch reads AALMSALTLGSTMGILTWMFV. At 613–630 the chain is on the periplasmic side; sequence DGHGSGLMNYTPQPLMAP. A helical transmembrane segment spans residues 631 to 651; that stretch reads MIGLIIAVIWGLSTDYEVFLV. An SQ109-binding site is contributed by aspartate 645. Residues 652-678 are Cytoplasmic-facing; the sequence is SRMVEARERGMSTAEAIRIGTATTGRL. Residues 679 to 699 traverse the membrane as a helical segment; sequence ITGAALILAVVAGAFVFSDLV. Over 700–703 the chain is Periplasmic; that stretch reads MMKY. A helical membrane pass occupies residues 704–724; the sequence is LAFGLLIALLLDATIIRMFLV. The Cytoplasmic segment spans residues 725-1013; the sequence is PAVMKLLGDD…QDLLRREGRL (289 aa). Positions 754–1013 are disordered; it reads TELPDERKRP…QDLLRREGRL (260 aa). The segment covering 757 to 772 has biased composition (basic and acidic residues); it reads PDERKRPTVRESETDQ. 2 stretches are compositionally biased toward pro residues: residues 792–803 and 820–829; these read HPAPEPVRPMPP and PPQPPQPPQA. The span at 842–867 shows a compositional bias: low complexity; it reads RFAMARNAVRNAVNSAVHGGAGSAAA. Positions 875–885 are enriched in pro residues; it reads PGGPAQPPAPP. Residues 973 to 996 are compositionally biased toward basic and acidic residues; that stretch reads REQEPSTEKLNTREDAPEDPETKR.

The protein belongs to the resistance-nodulation-cell division (RND) (TC 2.A.6) family. MmpL subfamily. Monomer. Interacts with TtfA (via N-terminus); active trehalose monomycolate (TMM) biosynthesis is not required for the complex formation. Interacts with MSMEG_5308.

The protein localises to the cell inner membrane. It is found in the cell septum. Its subcellular location is the cell tip. Inhibited by the antimycobacterial compound BM212, a pyrrole derivative. Inhibited by the antitubercular drug SQ109. Inhibited by the adamantyl urea derivative AU1235, the indole carboxamide ICA38 and rimonabant, the antagonist for the cannabinoid receptor CB1. The dissociation constant (Kd) values for SQ109, AU1235, ICA38 and rimonabant are 1.65 uM, 0.29, 0.16 and 29.5, respectively. Inhibitory effects are due to binding of the inhibitors at the proton-transportation channel most likely dissipating the transmembrane electrochemical proton gradient needed for substrate translocation. Transports trehalose monomycolate (TMM) to the cell wall. Flips TMM across the inner membrane. Membrane potential is not required for this function. Transports probably phosphatidylethanolamine (PE) as well. Binds specifically both TMM and PE, but not trehalose dimycolate (TDM). Also binds diacylglycerol (DAG) and other phospholipids, including phosphatidylglycerol (PG), phosphatidylinositol (PI), and cardiolipin (CDL). Contributes to membrane potential, cell wall composition, antibiotic susceptibility and fitness. The protein is Trehalose monomycolate exporter MmpL3 of Mycolicibacterium smegmatis (strain ATCC 700084 / mc(2)155) (Mycobacterium smegmatis).